Reading from the N-terminus, the 348-residue chain is GMP reductase (348 aa).

Residue 108 to 131 (ADFQKTKDVMALSDELIFICIDIA) participates in NADP(+) binding. Residues Gly181 and Gly183 each coordinate K(+). The active-site Thioimidate intermediate is the Cys186. 216–239 (IIGDGGCACAGDVAKAFGGGADFV) lines the NADP(+) pocket.

It belongs to the IMPDH/GMPR family. GuaC type 1 subfamily. Homotetramer.

It catalyses the reaction IMP + NH4(+) + NADP(+) = GMP + NADPH + 2 H(+). Catalyzes the irreversible NADPH-dependent deamination of GMP to IMP. It functions in the conversion of nucleobase, nucleoside and nucleotide derivatives of G to A nucleotides, and in maintaining the intracellular balance of A and G nucleotides. The chain is GMP reductase from Vibrio vulnificus (strain CMCP6).